Reading from the N-terminus, the 422-residue chain is UPF0597 protein Kole_0595 (422 aa).

Belongs to the UPF0597 family.

The chain is UPF0597 protein Kole_0595 from Kosmotoga olearia (strain ATCC BAA-1733 / DSM 21960 / TBF 19.5.1).